We begin with the raw amino-acid sequence, 380 residues long: Cytochrome b (380 aa).

Transmembrane regions (helical) follow at residues 33–53, 77–98, 113–133, and 178–198; these read FGSL…FLAM, WLIR…FLHV, WNMG…GYVL, and FFAF…VHLL. 2 residues coordinate heme b: His83 and His97. Heme b-binding residues include His182 and His196. His201 lines the a ubiquinone pocket. The next 4 helical transmembrane spans lie at 226-246, 288-308, 320-340, and 347-367; these read IKDF…TLFF, LGGV…PLLH, ITQT…WIGG, and FIII…ILMP.

It belongs to the cytochrome b family. The cytochrome bc1 complex contains 11 subunits: 3 respiratory subunits (MT-CYB, CYC1 and UQCRFS1), 2 core proteins (UQCRC1 and UQCRC2) and 6 low-molecular weight proteins (UQCRH/QCR6, UQCRB/QCR7, UQCRQ/QCR8, UQCR10/QCR9, UQCR11/QCR10 and a cleavage product of UQCRFS1). This cytochrome bc1 complex then forms a dimer. Requires heme b as cofactor.

Its subcellular location is the mitochondrion inner membrane. Its function is as follows. Component of the ubiquinol-cytochrome c reductase complex (complex III or cytochrome b-c1 complex) that is part of the mitochondrial respiratory chain. The b-c1 complex mediates electron transfer from ubiquinol to cytochrome c. Contributes to the generation of a proton gradient across the mitochondrial membrane that is then used for ATP synthesis. This Microtus guentheri (Gunther's vole) protein is Cytochrome b (MT-CYB).